A 340-amino-acid chain; its full sequence is Heat-inducible transcription repressor HrcA (340 aa).

It belongs to the HrcA family.

In terms of biological role, negative regulator of class I heat shock genes (grpE-dnaK-dnaJ and groELS operons). Prevents heat-shock induction of these operons. In Burkholderia thailandensis (strain ATCC 700388 / DSM 13276 / CCUG 48851 / CIP 106301 / E264), this protein is Heat-inducible transcription repressor HrcA.